The sequence spans 353 residues: MRIEKDKELMNILKIMAPGTPLREGLENILRAKTGGLLILGDSDQILKLVDGGFKINSEYSPSYVYELAKMDGSIVLSSDLKKILCANAQLIPDSSIPTFETGTRHRTADRVAKQTGAIVIAISQRRNIITVYKGGIKYVLRDSSIILARANQALQTLEKYVAVLDRVVNNLNILEFKDIATLFDVVTAIQRSEMVMRIVSEIERYICELGNEGRLIDMQLSELIKSVEEDGILLIRDYCRSNMEYEDIYKQIQGLSSEELLNLDGLSKIIGYTGVPLVDTLISPRGYRMINKIPRIPSNVIENLVANFNQLKCVMEASYEQLDNVEGIGEARAKAIKNGLRRLREQIMLDKV.

One can recognise a DAC domain in the interval 6 to 144 (DKELMNILKI…GGIKYVLRDS (139 aa)). Residues glycine 73, leucine 91, and 104-108 (TRHRT) each bind ATP.

The protein belongs to the DisA family. In terms of assembly, homooctamer. Mg(2+) serves as cofactor.

The enzyme catalyses 2 ATP = 3',3'-c-di-AMP + 2 diphosphate. In terms of biological role, participates in a DNA-damage check-point that is active prior to asymmetric division when DNA is damaged. DisA forms globular foci that rapidly scan along the chromosomes during sporulation, searching for lesions. When a lesion is present, DisA pauses at the lesion site. This triggers a cellular response that culminates in a temporary block in sporulation initiation. Functionally, also has diadenylate cyclase activity, catalyzing the condensation of 2 ATP molecules into cyclic di-AMP (c-di-AMP). c-di-AMP acts as a signaling molecule that couples DNA integrity with progression of sporulation. The rise in c-di-AMP level generated by DisA while scanning the chromosome, operates as a positive signal that advances sporulation; upon encountering a lesion, the DisA focus arrests at the damaged site and halts c-di-AMP synthesis. This chain is DNA integrity scanning protein DisA, found in Clostridium botulinum (strain Okra / Type B1).